A 318-amino-acid chain; its full sequence is Protein teg (318 aa).

In terms of domain architecture, PNPLA spans 7 to 182; the sequence is ITFDGGGTLG…VATNTSTASI (176 aa). The short motif at 11–16 is the GXGXXG element; it reads GGGTLG. The short motif at 42 to 46 is the GXSXG element; the sequence is GNSIG. S44 functions as the Nucleophile in the catalytic mechanism. D169 (proton acceptor) is an active-site residue.

Probable lipid hydrolase. The sequence is that of Protein teg (teg) from Priestia megaterium (strain ATCC 14581 / DSM 32 / CCUG 1817 / JCM 2506 / NBRC 15308 / NCIMB 9376 / NCTC 10342 / NRRL B-14308 / VKM B-512 / Ford 19) (Bacillus megaterium).